We begin with the raw amino-acid sequence, 337 residues long: tRNA N6-adenosine threonylcarbamoyltransferase (337 aa).

2 residues coordinate Fe cation: H107 and H111. Substrate contacts are provided by residues 129 to 133 (LISGG), D162, G175, and N271. D299 serves as a coordination point for Fe cation.

This sequence belongs to the KAE1 / TsaD family. It depends on Fe(2+) as a cofactor.

Its subcellular location is the cytoplasm. The enzyme catalyses L-threonylcarbamoyladenylate + adenosine(37) in tRNA = N(6)-L-threonylcarbamoyladenosine(37) in tRNA + AMP + H(+). Required for the formation of a threonylcarbamoyl group on adenosine at position 37 (t(6)A37) in tRNAs that read codons beginning with adenine. Is involved in the transfer of the threonylcarbamoyl moiety of threonylcarbamoyl-AMP (TC-AMP) to the N6 group of A37, together with TsaE and TsaB. TsaD likely plays a direct catalytic role in this reaction. In Sulfurovum sp. (strain NBC37-1), this protein is tRNA N6-adenosine threonylcarbamoyltransferase.